The chain runs to 218 residues: Cell division protein SepF (218 aa).

Residues 25-115 (DVAASTDNVI…IANRREQYQQ (91 aa)) are disordered. Residues 29–43 (STDNVIPRSQQSVRA) are compositionally biased toward polar residues. The segment covering 47-63 (PKQEPRNNHVQQDHQAR) has biased composition (basic and acidic residues). Residues 102 to 115 (STSSIANRREQYQQ) are compositionally biased toward polar residues.

It belongs to the SepF family. As to quaternary structure, homodimer. Interacts with FtsZ.

Its subcellular location is the cytoplasm. Functionally, cell division protein that is part of the divisome complex and is recruited early to the Z-ring. Probably stimulates Z-ring formation, perhaps through the cross-linking of FtsZ protofilaments. Its function overlaps with FtsA. The chain is Cell division protein SepF from Streptococcus pyogenes serotype M5 (strain Manfredo).